The chain runs to 84 residues: Small ribosomal subunit protein bS16 (84 aa).

Belongs to the bacterial ribosomal protein bS16 family.

The protein is Small ribosomal subunit protein bS16 of Ralstonia pickettii (strain 12J).